Reading from the N-terminus, the 425-residue chain is Enolase (425 aa).

Residue Gln163 participates in (2R)-2-phosphoglycerate binding. The active-site Proton donor is Glu205. Residues Asp242, Glu285, and Asp312 each contribute to the Mg(2+) site. (2R)-2-phosphoglycerate-binding residues include Lys337, Arg366, Ser367, and Lys388. The active-site Proton acceptor is the Lys337.

It belongs to the enolase family. The cofactor is Mg(2+).

The protein localises to the cytoplasm. Its subcellular location is the secreted. It is found in the cell surface. The enzyme catalyses (2R)-2-phosphoglycerate = phosphoenolpyruvate + H2O. It functions in the pathway carbohydrate degradation; glycolysis; pyruvate from D-glyceraldehyde 3-phosphate: step 4/5. Functionally, catalyzes the reversible conversion of 2-phosphoglycerate (2-PG) into phosphoenolpyruvate (PEP). It is essential for the degradation of carbohydrates via glycolysis. The protein is Enolase of Rhodospirillum rubrum (strain ATCC 11170 / ATH 1.1.1 / DSM 467 / LMG 4362 / NCIMB 8255 / S1).